We begin with the raw amino-acid sequence, 108 residues long: UPF0145 protein Acel_2109 (108 aa).

Belongs to the UPF0145 family.

The sequence is that of UPF0145 protein Acel_2109 from Acidothermus cellulolyticus (strain ATCC 43068 / DSM 8971 / 11B).